Reading from the N-terminus, the 117-residue chain is Phosphoribosyl-ATP pyrophosphatase (117 aa).

Basic and acidic residues predominate over residues 96–105 (GVSGIEEKLS). The interval 96 to 117 (GVSGIEEKLSRSQNQPEPTKAE) is disordered. Residues 106–117 (RSQNQPEPTKAE) show a composition bias toward polar residues.

This sequence belongs to the PRA-PH family.

The protein resides in the cytoplasm. The enzyme catalyses 1-(5-phospho-beta-D-ribosyl)-ATP + H2O = 1-(5-phospho-beta-D-ribosyl)-5'-AMP + diphosphate + H(+). It participates in amino-acid biosynthesis; L-histidine biosynthesis; L-histidine from 5-phospho-alpha-D-ribose 1-diphosphate: step 2/9. The polypeptide is Phosphoribosyl-ATP pyrophosphatase (Nitrosomonas eutropha (strain DSM 101675 / C91 / Nm57)).